The following is a 242-amino-acid chain: MTPLQLSEQGKIFHSQIRHLLQQLESNLAELRGGSDYAQRKIKIAAAHSLSLGLLPSIISQMPPLFTWAIEAIDVDEAVDKLREGQSDCIFSFHDEDLLEAPFDHIRLFESQLFPVCASDEHGEALFDLVQPHFPLLNYSRNSYMGRLINRTLTRHSELSFSTFFVSSMSELLKQVALDGCGIAWLPEYAIQQEIRSGQLVVLNRDELVIPIQAYAYRMNTRMNPVAERFWRELRELEIVLS.

This sequence belongs to the LysR transcriptional regulatory family.

Functionally, represses EHEC virulence expression. Down-regulates expression of LEE (locus of enterocyte effacement) and iraD genes, and alters AE (attaching and effacing) lesion formation. May regulate transcription through interactions with another HTH DNA-binding protein. This Escherichia coli O157:H7 protein is HTH domain-truncated transcriptional regulator QseD (qseD).